Here is a 133-residue protein sequence, read N- to C-terminus: Type VI secretion amidase effector 2 protein (133 aa).

Residues Cys-23 and His-73 contribute to the active site.

The protein belongs to the cell wall amidase Dae2/Tae2-like family.

The protein resides in the host periplasm. Its subcellular location is the secreted. Its pathway is cell wall degradation; peptidoglycan degradation. Its function is as follows. Toxic component of a contact-dependent interbacterial competition system (also called effector-immunity systems). Secreted by the SPI-6 type VI secretion system, probably into the periplasm of bacterial target cells. A cell wall amidase with specificity toward the D-meso-DAP-D-alanine bond (D-meso-diaminopimelic-D-alanine) found in peptidoglycan of Gram-negative bacteria. Toxicity is counteracted by a cognate immunity protein Tai2 (t2585), but not immunity proteins associated with a similar endopeptidase in other bacteria. In vitro degrades peptidoglycans from Gram-negative but not Gram-positive bacteria. This is Type VI secretion amidase effector 2 protein from Salmonella typhi.